We begin with the raw amino-acid sequence, 419 residues long: UDP-N-acetylglucosamine 1-carboxyvinyltransferase (419 aa).

22–23 (KN) provides a ligand contact to phosphoenolpyruvate. Arg-95 contacts UDP-N-acetyl-alpha-D-glucosamine. The Proton donor role is filled by Cys-119. A 2-(S-cysteinyl)pyruvic acid O-phosphothioketal modification is found at Cys-119. UDP-N-acetyl-alpha-D-glucosamine-binding positions include 164–167 (KVSV), Asp-308, and Ile-330.

This sequence belongs to the EPSP synthase family. MurA subfamily.

Its subcellular location is the cytoplasm. The catalysed reaction is phosphoenolpyruvate + UDP-N-acetyl-alpha-D-glucosamine = UDP-N-acetyl-3-O-(1-carboxyvinyl)-alpha-D-glucosamine + phosphate. The protein operates within cell wall biogenesis; peptidoglycan biosynthesis. Its function is as follows. Cell wall formation. Adds enolpyruvyl to UDP-N-acetylglucosamine. This is UDP-N-acetylglucosamine 1-carboxyvinyltransferase from Rickettsia peacockii (strain Rustic).